The following is a 202-amino-acid chain: Superoxide dismutase [Mn] (202 aa).

Residues His-27, His-82, Asp-164, and His-168 each contribute to the Mn(2+) site.

It belongs to the iron/manganese superoxide dismutase family. As to quaternary structure, homodimer. Mn(2+) is required as a cofactor.

The catalysed reaction is 2 superoxide + 2 H(+) = H2O2 + O2. In terms of biological role, destroys superoxide anion radicals which are normally produced within the cells and which are toxic to biological systems. This Listeria innocua serovar 6a (strain ATCC BAA-680 / CLIP 11262) protein is Superoxide dismutase [Mn] (sodA).